Here is a 427-residue protein sequence, read N- to C-terminus: Serine--tRNA ligase (427 aa).

231 to 233 (TAE) serves as a coordination point for L-serine. ATP is bound at residue 262-264 (RSE). Residue E285 participates in L-serine binding. 349-352 (EISS) contacts ATP. Residue S385 participates in L-serine binding.

Belongs to the class-II aminoacyl-tRNA synthetase family. Type-1 seryl-tRNA synthetase subfamily. In terms of assembly, homodimer. The tRNA molecule binds across the dimer.

It is found in the cytoplasm. The catalysed reaction is tRNA(Ser) + L-serine + ATP = L-seryl-tRNA(Ser) + AMP + diphosphate + H(+). The enzyme catalyses tRNA(Sec) + L-serine + ATP = L-seryl-tRNA(Sec) + AMP + diphosphate + H(+). It functions in the pathway aminoacyl-tRNA biosynthesis; selenocysteinyl-tRNA(Sec) biosynthesis; L-seryl-tRNA(Sec) from L-serine and tRNA(Sec): step 1/1. In terms of biological role, catalyzes the attachment of serine to tRNA(Ser). Is also able to aminoacylate tRNA(Sec) with serine, to form the misacylated tRNA L-seryl-tRNA(Sec), which will be further converted into selenocysteinyl-tRNA(Sec). The polypeptide is Serine--tRNA ligase (Sinorhizobium medicae (strain WSM419) (Ensifer medicae)).